Reading from the N-terminus, the 583-residue chain is Orphan steroid hormone receptor 2 (583 aa).

The nuclear receptor DNA-binding region spans 84 to 159 (IELCAVCGDK…MGMKSDSVQC (76 aa)). 2 NR C4-type zinc fingers span residues 87–107 (CAVC…CEGC) and 123–142 (CRGN…CQYC). The 316-residue stretch at 248 to 563 (TLASVVTSLA…SIIPYILRME (316 aa)) folds into the NR LBD domain.

Belongs to the nuclear hormone receptor family. NR2 subfamily. As to quaternary structure, binds DNA as a monomer. As to expression, expressed uniformly in the early embryo. In contrast, larval expression is localized to the epaulettes and mouth epithelium. Expressed in multiple adult organs including lantern muscle, tubefeet, intestine, coelomocytes and gonads. In the adult ovaries and testes, expression is specifically localized to the smooth muscle epithelial layer of cells which surround the ovarioles and acini, respectively (at protein level).

The protein localises to the cytoplasm. Its subcellular location is the nucleus. Functionally, orphan nuclear receptor. Binds to the hormone response element in the upstream promoter region of the CYIIIB gene in vitro. Both isoform 1 and isoform 2 bind DNA. This chain is Orphan steroid hormone receptor 2, found in Strongylocentrotus purpuratus (Purple sea urchin).